Consider the following 269-residue polypeptide: Pyrroline-5-carboxylate reductase (269 aa).

Belongs to the pyrroline-5-carboxylate reductase family.

It localises to the cytoplasm. It catalyses the reaction L-proline + NADP(+) = (S)-1-pyrroline-5-carboxylate + NADPH + 2 H(+). The catalysed reaction is L-proline + NAD(+) = (S)-1-pyrroline-5-carboxylate + NADH + 2 H(+). It participates in amino-acid biosynthesis; L-proline biosynthesis; L-proline from L-glutamate 5-semialdehyde: step 1/1. Inhibited by p-chloromercuribenzoate. In terms of biological role, catalyzes the reduction of 1-pyrroline-5-carboxylate (PCA) to L-proline. Does not catalyze the reverse reaction. This is Pyrroline-5-carboxylate reductase from Escherichia coli (strain K12).